Reading from the N-terminus, the 273-residue chain is Formamidopyrimidine-DNA glycosylase (273 aa).

Residue proline 2 is the Schiff-base intermediate with DNA of the active site. Glutamate 3 functions as the Proton donor in the catalytic mechanism. Lysine 58 serves as the catalytic Proton donor; for beta-elimination activity. Residues histidine 92, arginine 111, and arginine 153 each contribute to the DNA site. The FPG-type zinc finger occupies 238 to 272; sequence RVYGREGQKCFNCSSTILKTKNSGRSTFYCKTCQY. Residue arginine 262 is the Proton donor; for delta-elimination activity of the active site.

Belongs to the FPG family. Monomer. Zn(2+) serves as cofactor.

It carries out the reaction Hydrolysis of DNA containing ring-opened 7-methylguanine residues, releasing 2,6-diamino-4-hydroxy-5-(N-methyl)formamidopyrimidine.. The catalysed reaction is 2'-deoxyribonucleotide-(2'-deoxyribose 5'-phosphate)-2'-deoxyribonucleotide-DNA = a 3'-end 2'-deoxyribonucleotide-(2,3-dehydro-2,3-deoxyribose 5'-phosphate)-DNA + a 5'-end 5'-phospho-2'-deoxyribonucleoside-DNA + H(+). Involved in base excision repair of DNA damaged by oxidation or by mutagenic agents. Acts as a DNA glycosylase that recognizes and removes damaged bases. Has a preference for oxidized purines, such as 7,8-dihydro-8-oxoguanine (8-oxoG). Has AP (apurinic/apyrimidinic) lyase activity and introduces nicks in the DNA strand. Cleaves the DNA backbone by beta-delta elimination to generate a single-strand break at the site of the removed base with both 3'- and 5'-phosphates. This Rickettsia canadensis (strain McKiel) protein is Formamidopyrimidine-DNA glycosylase.